The sequence spans 957 residues: Leucine--tRNA ligase (957 aa).

The short motif at 70-81 is the 'HIGH' region element; it reads PYPSGAGLHVGH. The 'KMSKS' region signature appears at 727 to 731; the sequence is KMGKS. Position 730 (Lys-730) interacts with ATP.

Belongs to the class-I aminoacyl-tRNA synthetase family.

The protein localises to the cytoplasm. It catalyses the reaction tRNA(Leu) + L-leucine + ATP = L-leucyl-tRNA(Leu) + AMP + diphosphate. The polypeptide is Leucine--tRNA ligase (Corynebacterium efficiens (strain DSM 44549 / YS-314 / AJ 12310 / JCM 11189 / NBRC 100395)).